The chain runs to 465 residues: ATP-dependent RNA helicase ddx19 (465 aa).

Residues 1–20 (MSEKETNTTSTENKEKEKQE) show a composition bias toward basic and acidic residues. The tract at residues 1–45 (MSEKETNTTSTENKEKEKQEQTNTNSTTESTNNQVDEEYERPGRS) is disordered. Low complexity predominate over residues 21-34 (QTNTNSTTESTNNQ). Residues 70-98 (KTFEELGLKPELLKGVYAMGYNKPSKIQE) carry the Q motif motif. Residues 102–268 (PIIIQSPNNL…KKIVQDPYTS (167 aa)) form the Helicase ATP-binding domain. ATP is bound at residue 115–122 (SQSGTGKT). The short motif at 215–218 (DEAD) is the DEAD box element. The Helicase C-terminal domain occupies 297-449 (ILSDIYGFIS…ELKSSEIESL (153 aa)).

It belongs to the DEAD box helicase family. DDX19/DBP5 subfamily.

It carries out the reaction ATP + H2O = ADP + phosphate + H(+). ATP-binding RNA helicase required for normal differentiation and development. In Dictyostelium discoideum (Social amoeba), this protein is ATP-dependent RNA helicase ddx19 (helC).